The chain runs to 658 residues: UvrABC system protein B (658 aa).

Residues 26–414 enclose the Helicase ATP-binding domain; it reads AGLKKGLKHQ…PDVIEQIIRP (389 aa). Residue 39 to 46 participates in ATP binding; that stretch reads GATGTGKT. A Beta-hairpin motif is present at residues 92-115; that stretch reads YYDYYQPEAYVPQSDTYIEKDASI. In terms of domain architecture, Helicase C-terminal spans 430–592; that stretch reads QIDDLMDEIN…ITPKTIKKEI (163 aa). Residues 622 to 658 enclose the UVR domain; it reads DVFIEGMEHEMKEAAKALDFERAAELRDALLEIKAEG.

This sequence belongs to the UvrB family. Forms a heterotetramer with UvrA during the search for lesions. Interacts with UvrC in an incision complex.

It is found in the cytoplasm. In terms of biological role, the UvrABC repair system catalyzes the recognition and processing of DNA lesions. A damage recognition complex composed of 2 UvrA and 2 UvrB subunits scans DNA for abnormalities. Upon binding of the UvrA(2)B(2) complex to a putative damaged site, the DNA wraps around one UvrB monomer. DNA wrap is dependent on ATP binding by UvrB and probably causes local melting of the DNA helix, facilitating insertion of UvrB beta-hairpin between the DNA strands. Then UvrB probes one DNA strand for the presence of a lesion. If a lesion is found the UvrA subunits dissociate and the UvrB-DNA preincision complex is formed. This complex is subsequently bound by UvrC and the second UvrB is released. If no lesion is found, the DNA wraps around the other UvrB subunit that will check the other stand for damage. The protein is UvrABC system protein B of Listeria monocytogenes serotype 4b (strain F2365).